The chain runs to 96 residues: Fruit-specific protein (96 aa).

Intrachain disulfides connect cysteine 59-cysteine 75, cysteine 63-cysteine 78, and cysteine 69-cysteine 92.

In terms of tissue distribution, fruit specific.

The sequence is that of Fruit-specific protein (2A11) from Solanum lycopersicum (Tomato).